The following is a 206-amino-acid chain: dITP/XTP pyrophosphatase (206 aa).

Residue 7 to 12 coordinates substrate; sequence SRNPKK. The active-site Proton acceptor is the Asp-72. Mg(2+) is bound at residue Asp-72. Substrate is bound by residues Ser-73, 155–158, Lys-178, and 183–184; these read FGYD and HR.

Belongs to the HAM1 NTPase family. As to quaternary structure, homodimer. Mg(2+) is required as a cofactor.

It catalyses the reaction XTP + H2O = XMP + diphosphate + H(+). The catalysed reaction is dITP + H2O = dIMP + diphosphate + H(+). The enzyme catalyses ITP + H2O = IMP + diphosphate + H(+). In terms of biological role, pyrophosphatase that catalyzes the hydrolysis of nucleoside triphosphates to their monophosphate derivatives, with a high preference for the non-canonical purine nucleotides XTP (xanthosine triphosphate), dITP (deoxyinosine triphosphate) and ITP. Seems to function as a house-cleaning enzyme that removes non-canonical purine nucleotides from the nucleotide pool, thus preventing their incorporation into DNA/RNA and avoiding chromosomal lesions. The protein is dITP/XTP pyrophosphatase of Mycobacteroides abscessus (strain ATCC 19977 / DSM 44196 / CCUG 20993 / CIP 104536 / JCM 13569 / NCTC 13031 / TMC 1543 / L948) (Mycobacterium abscessus).